We begin with the raw amino-acid sequence, 539 residues long: Glutathione synthetase, chloroplastic (539 aa).

A chloroplast-targeting transit peptide spans 1 to 61 (MGSGCSSLSY…SPLRCGRSFK (61 aa)). R193 is a binding site for substrate. Position 209 (E209) interacts with ATP. Positions 209 and 211 each coordinate Mg(2+). Residues 213 to 216 (ISCS), 281 to 283 (ERN), Q287, and 335 to 338 (RSGY) contribute to the substrate site. ATP is bound by residues K374, 428-437 (KPQREGGGNN), Y439, 464-467 (MQRI), and E490. Residue E432 participates in Mg(2+) binding. R515 lines the substrate pocket. Positions 517 and 523 each coordinate ATP. 526–527 (VA) provides a ligand contact to substrate.

Belongs to the eukaryotic GSH synthase family. In terms of assembly, homodimer. Mg(2+) serves as cofactor.

It localises to the plastid. Its subcellular location is the chloroplast. The enzyme catalyses gamma-L-glutamyl-L-cysteine + glycine + ATP = glutathione + ADP + phosphate + H(+). It participates in sulfur metabolism; glutathione biosynthesis; glutathione from L-cysteine and L-glutamate: step 2/2. In Arabidopsis thaliana (Mouse-ear cress), this protein is Glutathione synthetase, chloroplastic (GSH2).